Reading from the N-terminus, the 371-residue chain is Phospholipid-transporting ATPase accessory subunit ivn1 (371 aa).

Residues 1 to 39 are Cytoplasmic-facing; it reads MSQTEIVKKPKHKRFKRPDKSRFVQQTLPAWQFIFTPWT. Residues 40 to 60 traverse the membrane as a helical segment; the sequence is VLPLLFLLGIVFAPLGAGMFV. The Extracellular portion of the chain corresponds to 61 to 325; it reads ASRRVKELRI…STTSVIGGKN (265 aa). Intrachain disulfides connect Cys75–Cys111 and Cys166–Cys181. The N-linked (GlcNAc...) asparagine glycan is linked to Asn99. N-linked (GlcNAc...) asparagine glycans are attached at residues Asn190, Asn212, Asn216, Asn233, Asn284, and Asn297. The helical transmembrane segment at 326-346 threads the bilayer; it reads YFLGILYFVIGGLCAASGVIL. At 347-371 the chain is on the cytoplasmic side; the sequence is SIACLIKPRRVGDPRYLSWNRGKSS.

The protein belongs to the CDC50/LEM3 family.

Its subcellular location is the endoplasmic reticulum membrane. Its function is as follows. Accessory component of a P4-ATPase flippase complex which catalyzes the hydrolysis of ATP coupled to the transport of aminophospholipids from the lumenal to the cytosolic leaflet of membranes and ensures the maintenance of asymmetric distribution of phospholipids. This chain is Phospholipid-transporting ATPase accessory subunit ivn1 (ivn1), found in Schizosaccharomyces pombe (strain 972 / ATCC 24843) (Fission yeast).